The following is a 238-amino-acid chain: Large ribosomal subunit protein uL2 (238 aa).

Positions 201-238 are disordered; sequence FGGGGHQHPGRPKTIARGTSPGRTVGHVAARQTGRSRK.

Belongs to the universal ribosomal protein uL2 family. Part of the 50S ribosomal subunit. Forms a bridge to the 30S subunit in the 70S ribosome.

In terms of biological role, one of the primary rRNA binding proteins. Required for association of the 30S and 50S subunits to form the 70S ribosome, for tRNA binding and peptide bond formation. It has been suggested to have peptidyltransferase activity; this is somewhat controversial. Makes several contacts with the 16S rRNA in the 70S ribosome. This Methanoregula boonei (strain DSM 21154 / JCM 14090 / 6A8) protein is Large ribosomal subunit protein uL2.